A 63-amino-acid chain; its full sequence is Large ribosomal subunit protein uL29 (63 aa).

It belongs to the universal ribosomal protein uL29 family.

In Shewanella oneidensis (strain ATCC 700550 / JCM 31522 / CIP 106686 / LMG 19005 / NCIMB 14063 / MR-1), this protein is Large ribosomal subunit protein uL29.